Reading from the N-terminus, the 838-residue chain is DNA gyrase subunit A (838 aa).

Threonine 2 carries the N-acetylthreonine modification. Residues 41 to 510 (LPEVRDGLKP…ADGDVSDEDL (470 aa)) enclose the Topo IIA-type catalytic domain. The active-site O-(5'-phospho-DNA)-tyrosine intermediate is the tyrosine 129. Residues aspartate 504, serine 506, glutamate 508, and aspartate 515 each contribute to the Ca(2+) site. The EF-hand domain occupies 504–516 (DVSDEDLIAREDV). A C-terminal domain CTD region spans residues 514–838 (EDVVVTITET…DANGADQTGN (325 aa)). The short motif at 537-543 (QKRGGKG) is the GyrA-box element. Positions 743–749 (QGRGGKG) match the GyrA-box-1 motif.

Belongs to the type II topoisomerase GyrA/ParC subunit family. In terms of assembly, heterotetramer, composed of two GyrA and two GyrB chains. In the heterotetramer, GyrA contains the active site tyrosine that forms a transient covalent intermediate with DNA, while GyrB binds cofactors and catalyzes ATP hydrolysis. Ca(2+) serves as cofactor.

The protein localises to the cytoplasm. The catalysed reaction is ATP-dependent breakage, passage and rejoining of double-stranded DNA.. DNA supercoiling inhibited by (fluoro)quinoline antibiotics such as sparfloxacin and levofloxacin, which usually act on GyrA. DNA supercoiling inhibited by the coumarin antibiotic novobiocin which acts on GyrB. Quinolones lead to gyrase-mediated dsDNA cleavage while preventing reclosure. DNA supercoiling activity inhibited by aminopyrazinamide and pyrrolamide derivatives, probably via effects on the GyrB subunit. DNA relaxation inhibited by ATP and its analogs. DNA supercoiling, relaxation, decatenation and quinolone-promoted DNA cleavage are inhibited by MfpA (50% inhibition occurs at 2 uM), inhibition of gyrase activities is enhanced in a concentration-dependent manner by MfpA. In terms of biological role, a type II topoisomerase that negatively supercoils closed circular double-stranded (ds) DNA in an ATP-dependent manner to maintain chromosomes in an underwound state, while in the absence of ATP it relaxes supercoiled dsDNA. Also catalyzes the interconversion of other topological isomers of dsDNA rings, including catenanes. Gyrase from M.tuberculosis has higher decatenation than supercoiling activity compared to E.coli; as M.tuberculosis only has 1 type II topoisomerase, gyrase has to fulfill the decatenation function of topoisomerase IV as well. At comparable concentrations M.tuberculosis gyrase cannot introduce as many negative supercoils into DNA as the E.coli enzyme, and its ATPase activity is lower, perhaps because it does not couple DNA wrapping and ATP binding as well as E.coli. Functionally, negative supercoiling favors strand separation, and DNA replication, transcription, recombination and repair, all of which involve strand separation. Type II topoisomerases break and join 2 DNA strands simultaneously in an ATP-dependent manner. In Mycobacterium tuberculosis (strain ATCC 25618 / H37Rv), this protein is DNA gyrase subunit A.